The primary structure comprises 274 residues: Large ribosomal subunit protein uL2cz (274 aa).

2 disordered regions span residues Met-1–Asn-25 and Asn-224–Lys-274. A compositionally biased stretch (polar residues) spans Lys-7–Asn-25.

Belongs to the universal ribosomal protein uL2 family. Part of the 50S ribosomal subunit.

The protein localises to the plastid. It is found in the chloroplast. The polypeptide is Large ribosomal subunit protein uL2cz (rpl2-A) (Atropa belladonna (Belladonna)).